We begin with the raw amino-acid sequence, 116 residues long: Small ribosomal subunit protein uS8c (116 aa).

This sequence belongs to the universal ribosomal protein uS8 family. In terms of assembly, part of the 30S ribosomal subunit.

It is found in the plastid. The protein localises to the chloroplast. Functionally, one of the primary rRNA binding proteins, it binds directly to 16S rRNA central domain where it helps coordinate assembly of the platform of the 30S subunit. This is Small ribosomal subunit protein uS8c (rps8) from Musa acuminata (Banana).